The chain runs to 305 residues: Aspartate carbamoyltransferase catalytic subunit (305 aa).

Residues Arg60 and Thr61 each coordinate carbamoyl phosphate. An L-aspartate-binding site is contributed by Lys88. Carbamoyl phosphate contacts are provided by Arg110, His138, and Gln141. L-aspartate-binding residues include Arg171 and Arg222. Ala263 and Pro264 together coordinate carbamoyl phosphate.

It belongs to the aspartate/ornithine carbamoyltransferase superfamily. ATCase family. As to quaternary structure, heterododecamer (2C3:3R2) of six catalytic PyrB chains organized as two trimers (C3), and six regulatory PyrI chains organized as three dimers (R2).

The catalysed reaction is carbamoyl phosphate + L-aspartate = N-carbamoyl-L-aspartate + phosphate + H(+). The protein operates within pyrimidine metabolism; UMP biosynthesis via de novo pathway; (S)-dihydroorotate from bicarbonate: step 2/3. In terms of biological role, catalyzes the condensation of carbamoyl phosphate and aspartate to form carbamoyl aspartate and inorganic phosphate, the committed step in the de novo pyrimidine nucleotide biosynthesis pathway. The sequence is that of Aspartate carbamoyltransferase catalytic subunit from Halalkalibacterium halodurans (strain ATCC BAA-125 / DSM 18197 / FERM 7344 / JCM 9153 / C-125) (Bacillus halodurans).